A 395-amino-acid polypeptide reads, in one-letter code: Elongation factor Tu (395 aa).

The tr-type G domain occupies 10-204; it reads KSHVNVGTLG…AVDEYIPTPE (195 aa). Residues 19-26 are G1; the sequence is GHVDHGKT. Position 19–26 (19–26) interacts with GTP; the sequence is GHVDHGKT. A Mg(2+)-binding site is contributed by T26. Positions 60–64 are G2; that stretch reads GITIS. A G3 region spans residues 81 to 84; that stretch reads DCPG. Residues 81–85 and 136–139 each bind GTP; these read DCPGH and NKTD. The interval 136 to 139 is G4; the sequence is NKTD. A G5 region spans residues 174-176; sequence SAL.

The protein belongs to the TRAFAC class translation factor GTPase superfamily. Classic translation factor GTPase family. EF-Tu/EF-1A subfamily. As to quaternary structure, monomer.

It localises to the cytoplasm. The enzyme catalyses GTP + H2O = GDP + phosphate + H(+). In terms of biological role, GTP hydrolase that promotes the GTP-dependent binding of aminoacyl-tRNA to the A-site of ribosomes during protein biosynthesis. In Oceanobacillus iheyensis (strain DSM 14371 / CIP 107618 / JCM 11309 / KCTC 3954 / HTE831), this protein is Elongation factor Tu.